The following is a 357-amino-acid chain: 3-dehydroquinate synthase (357 aa).

Residues 99–103 (GATGD), 123–124 (TT), K135, K144, and 162–165 (FLET) each bind NAD(+). Residues E177, H247, and H261 each contribute to the Zn(2+) site.

Belongs to the sugar phosphate cyclases superfamily. Dehydroquinate synthase family. Requires Co(2+) as cofactor. It depends on Zn(2+) as a cofactor. The cofactor is NAD(+).

It is found in the cytoplasm. It catalyses the reaction 7-phospho-2-dehydro-3-deoxy-D-arabino-heptonate = 3-dehydroquinate + phosphate. It participates in metabolic intermediate biosynthesis; chorismate biosynthesis; chorismate from D-erythrose 4-phosphate and phosphoenolpyruvate: step 2/7. In terms of biological role, catalyzes the conversion of 3-deoxy-D-arabino-heptulosonate 7-phosphate (DAHP) to dehydroquinate (DHQ). This chain is 3-dehydroquinate synthase, found in Macrococcus caseolyticus (strain JCSC5402) (Macrococcoides caseolyticum).